The following is a 348-amino-acid chain: Histidinol-phosphate aminotransferase (348 aa).

Lys211 is modified (N6-(pyridoxal phosphate)lysine).

Belongs to the class-II pyridoxal-phosphate-dependent aminotransferase family. Histidinol-phosphate aminotransferase subfamily. In terms of assembly, homodimer. Pyridoxal 5'-phosphate serves as cofactor.

The enzyme catalyses L-histidinol phosphate + 2-oxoglutarate = 3-(imidazol-4-yl)-2-oxopropyl phosphate + L-glutamate. It participates in amino-acid biosynthesis; L-histidine biosynthesis; L-histidine from 5-phospho-alpha-D-ribose 1-diphosphate: step 7/9. The chain is Histidinol-phosphate aminotransferase from Chlorobaculum tepidum (strain ATCC 49652 / DSM 12025 / NBRC 103806 / TLS) (Chlorobium tepidum).